We begin with the raw amino-acid sequence, 471 residues long: Ribulose bisphosphate carboxylase large chain (471 aa).

The substrate site is built by N115 and T165. Catalysis depends on K167, which acts as the Proton acceptor. K169 is a binding site for substrate. Mg(2+) contacts are provided by K193, D195, and E196. Residue K193 is modified to N6-carboxylysine. H286 functions as the Proton acceptor in the catalytic mechanism. The substrate site is built by R287, H319, and S371.

This sequence belongs to the RuBisCO large chain family. Type I subfamily. Heterohexadecamer of 8 large chains and 8 small chains. Mg(2+) serves as cofactor.

The protein resides in the carboxysome. It catalyses the reaction 2 (2R)-3-phosphoglycerate + 2 H(+) = D-ribulose 1,5-bisphosphate + CO2 + H2O. It carries out the reaction D-ribulose 1,5-bisphosphate + O2 = 2-phosphoglycolate + (2R)-3-phosphoglycerate + 2 H(+). Its function is as follows. RuBisCO catalyzes two reactions: the carboxylation of D-ribulose 1,5-bisphosphate, the primary event in carbon dioxide fixation, as well as the oxidative fragmentation of the pentose substrate in the photorespiration process. Both reactions occur simultaneously and in competition at the same active site. The chain is Ribulose bisphosphate carboxylase large chain from Synechococcus sp. (strain WH7803).